The following is a 157-amino-acid chain: Lipoprotein signal peptidase (157 aa).

3 helical membrane passes run 10 to 30 (LIFI…KYAI), 58 to 78 (FLEG…FIFL), and 84 to 104 (LFKN…SNVL). Catalysis depends on residues aspartate 114 and aspartate 131. The helical transmembrane segment at 122 to 142 (FDFAIFNFADVMIDVGVGVLL) threads the bilayer.

Belongs to the peptidase A8 family.

The protein resides in the cell inner membrane. It carries out the reaction Release of signal peptides from bacterial membrane prolipoproteins. Hydrolyzes -Xaa-Yaa-Zaa-|-(S,diacylglyceryl)Cys-, in which Xaa is hydrophobic (preferably Leu), and Yaa (Ala or Ser) and Zaa (Gly or Ala) have small, neutral side chains.. It participates in protein modification; lipoprotein biosynthesis (signal peptide cleavage). Functionally, this protein specifically catalyzes the removal of signal peptides from prolipoproteins. This Helicobacter pylori (strain Shi470) protein is Lipoprotein signal peptidase.